The sequence spans 95 residues: Large ribosomal subunit protein bL25 (95 aa).

Belongs to the bacterial ribosomal protein bL25 family. Part of the 50S ribosomal subunit; part of the 5S rRNA/L5/L18/L25 subcomplex. Contacts the 5S rRNA. Binds to the 5S rRNA independently of L5 and L18.

Functionally, this is one of the proteins that binds to the 5S RNA in the ribosome where it forms part of the central protuberance. The sequence is that of Large ribosomal subunit protein bL25 from Shewanella putrefaciens (strain CN-32 / ATCC BAA-453).